The primary structure comprises 124 residues: Darcynin homolog (124 aa).

It belongs to the darcynin family.

This Granulibacter bethesdensis (strain ATCC BAA-1260 / CGDNIH1) protein is Darcynin homolog.